Consider the following 974-residue polypeptide: Cell division control protein 15 (974 aa).

Residues tyrosine 25–isoleucine 272 enclose the Protein kinase domain. ATP contacts are provided by residues isoleucine 31–valine 39 and lysine 54. Residue aspartate 146 is the Proton acceptor of the active site. Positions cysteine 360–leucine 702 are self association domain. Low complexity predominate over residues serine 554–proline 563. The segment at serine 554 to methionine 592 is disordered. A phosphoserine mark is found at serine 561 and serine 567. A compositionally biased stretch (polar residues) spans threonine 564–proline 579. An auto-inhibitory domain region spans residues threonine 751–threonine 974. Threonine 870 is modified (phosphothreonine). The tract at residues alanine 941–threonine 974 is disordered. Residues threonine 948–aspartate 963 are compositionally biased toward basic and acidic residues.

It belongs to the protein kinase superfamily. Ser/Thr protein kinase family. Homodimer. Interacts with TEM1. Post-translationally, phosphorylation by CDK1 reduces the binding to the mother spindle pole body. The extent of phosphorylation gradually increases during cell-cycle progression until some point during late anaphase/telophase when it is rapidly dephosphorylated by CDC14. Phosphorylation inhibits kinase activity and dephosphorylation by CDC14 activates CDC15.

The protein resides in the cytoplasm. It localises to the cytoskeleton. The protein localises to the spindle pole. It is found in the bud neck. It catalyses the reaction L-seryl-[protein] + ATP = O-phospho-L-seryl-[protein] + ADP + H(+). The enzyme catalyses L-threonyl-[protein] + ATP = O-phospho-L-threonyl-[protein] + ADP + H(+). Its activity is regulated as follows. Kinase activity is inhibited by phosphorylation and activated by dephosphorylation by CDC14. Protein kinase of the mitotic exit network (MEN) essential for late nuclear division in the mitotic cycle. Promotes mitotic exit by phosphorylating DBF2 and directly switching on DBF2 kinase activity. Involved in the localization of DBF2 and DBF20 to the neck which is necessary to undergo cytokinesis. Plays a role in segregation of chromosomes during recovery from spindle checkpoint activation. Required for spindle pole localization of CDK1 and inactivation of CDC2 kinase activity at the end of mitosis. Required for spindle disassembly after meiosis II and plays a role in spore morphogenesis. The sequence is that of Cell division control protein 15 (CDC15) from Saccharomyces cerevisiae (strain ATCC 204508 / S288c) (Baker's yeast).